A 317-amino-acid chain; its full sequence is Acetyl-coenzyme A carboxylase carboxyl transferase subunit alpha (317 aa).

One can recognise a CoA carboxyltransferase C-terminal domain in the interval 43–293 (RVRESMADIY…GDVISNALGE (251 aa)).

Belongs to the AccA family. As to quaternary structure, acetyl-CoA carboxylase is a heterohexamer composed of biotin carboxyl carrier protein (AccB), biotin carboxylase (AccC) and two subunits each of ACCase subunit alpha (AccA) and ACCase subunit beta (AccD).

The protein resides in the cytoplasm. The enzyme catalyses N(6)-carboxybiotinyl-L-lysyl-[protein] + acetyl-CoA = N(6)-biotinyl-L-lysyl-[protein] + malonyl-CoA. It functions in the pathway lipid metabolism; malonyl-CoA biosynthesis; malonyl-CoA from acetyl-CoA: step 1/1. Functionally, component of the acetyl coenzyme A carboxylase (ACC) complex. First, biotin carboxylase catalyzes the carboxylation of biotin on its carrier protein (BCCP) and then the CO(2) group is transferred by the carboxyltransferase to acetyl-CoA to form malonyl-CoA. The protein is Acetyl-coenzyme A carboxylase carboxyl transferase subunit alpha of Rhizobium rhizogenes (strain K84 / ATCC BAA-868) (Agrobacterium radiobacter).